We begin with the raw amino-acid sequence, 513 residues long: MEKYQAYLELRRSRYQDILYPLFFRESIYGLAYGHESFFIENIDYNNKFSLLIVKRLSTRMYQQTNFILFANDSNKKTFGGYNYNFDSQIILEGFGVVVEILFSLQLFISSLRGLESVKSYKNLQSIHSIFPFFEDKLIYLNHKSDIRIPYPIHLEILVQILRYWIKDVSFFHLIRFFFYYYSNWNSLFPPKKGISPFFSKRNLRIFLFLYNLYVWEYESIFLFLRNKSSQLQLKHFRVFFERIFFYEKRKHLVEISTKNCSYTLFFFKDTFIHYVRYQGKSILVLKNTPLLINKWKYYFLYLWQCYFDIWAGPETIYINQLSQYSFHFLGYFLSIPQNLSVVRSQMLKNSFLIKIVIKKLDTIIPIIPLMRSLAKTKFCNVMGHPISKPVWANFSDFYILDRFLRICRNFSHYYNGSAKKKSFYQIKYILRFSCIKTLARKHKSTVRTFLKKLSSEKLLEEFFTEEDLFSLIFPKTSLTLRRFYRGRIWYLDILFRNDFVNHLELKIGYDIL.

This sequence belongs to the intron maturase 2 family. MatK subfamily.

It localises to the plastid. The protein localises to the chloroplast. Functionally, usually encoded in the trnK tRNA gene intron. Probably assists in splicing its own and other chloroplast group II introns. In Phaseolus vulgaris (Kidney bean), this protein is Maturase K.